The following is a 410-amino-acid chain: 2-epi-5-epi-valiolone synthase (410 aa).

NAD(+)-binding positions include Asp-66, 97 to 100 (ETLK), 130 to 134 (GVLMD), 154 to 155 (TT), Lys-167, Lys-176, and 194 to 197 (FLAT). Lys-167 is a catalytic residue. Positions 209, 280, and 296 each coordinate a divalent metal cation.

This sequence belongs to the sugar phosphate cyclases superfamily. EEVS family. It depends on NAD(+) as a cofactor. Co(2+) is required as a cofactor.

It carries out the reaction D-sedoheptulose 7-phosphate = 2-epi-5-epi-valiolone + phosphate. Catalyzes the cyclization of D-sedoheptulose 7-phosphate to 2-epi-5-epi-valiolone. Involved in salbostatin biosynthesis. The chain is 2-epi-5-epi-valiolone synthase from Streptomyces albus (strain ATCC 21838 / DSM 41398 / FERM P-419 / JCM 4703 / NBRC 107858).